The chain runs to 102 residues: Small ribosomal subunit protein uS10 (102 aa).

Belongs to the universal ribosomal protein uS10 family. Part of the 30S ribosomal subunit.

Its function is as follows. Involved in the binding of tRNA to the ribosomes. This chain is Small ribosomal subunit protein uS10, found in Paramagnetospirillum magneticum (strain ATCC 700264 / AMB-1) (Magnetospirillum magneticum).